Here is a 198-residue protein sequence, read N- to C-terminus: MFYPEPVSKLIDGFMKLPGIGPKTAGRLAFFVLNMKEDDVLDLAKALVNAKRQLHYCSVCNNITDLDPCHICRDKRRDGSIICVVQEPRDVVAMEKTREFEGYYHVLHGAISPMDGIGPEDIRIPDLLKRLGDEQVKEVILATNPNIEGEATAMYISRLIKPFGIRVTRIAHGLPVGGDLEYADEVTLTKALEGRRDL.

Residues cysteine 57–cysteine 72 form a C4-type zinc finger. Residues serine 80 to proline 175 form the Toprim domain.

It belongs to the RecR family.

Functionally, may play a role in DNA repair. It seems to be involved in an RecBC-independent recombinational process of DNA repair. It may act with RecF and RecO. In Brevibacillus brevis (strain 47 / JCM 6285 / NBRC 100599), this protein is Recombination protein RecR.